We begin with the raw amino-acid sequence, 292 residues long: NADH-ubiquinone oxidoreductase chain 1 (292 aa).

A run of 8 helical transmembrane segments spans residues 2–22 (IVAS…MFTL), 71–91 (FAAS…GICI), 98–118 (GLVI…AGWA), 132–152 (VALM…IGLF), 167–187 (MPTT…VCIL), 213–233 (LGFA…SAIA), 235–255 (IYFL…AFVW), and 272–292 (GWKA…SVAI).

Belongs to the complex I subunit 1 family.

The protein resides in the mitochondrion inner membrane. It catalyses the reaction a ubiquinone + NADH + 5 H(+)(in) = a ubiquinol + NAD(+) + 4 H(+)(out). In terms of biological role, core subunit of the mitochondrial membrane respiratory chain NADH dehydrogenase (Complex I) that is believed to belong to the minimal assembly required for catalysis. Complex I functions in the transfer of electrons from NADH to the respiratory chain. The immediate electron acceptor for the enzyme is believed to be ubiquinone. The sequence is that of NADH-ubiquinone oxidoreductase chain 1 (ND1) from Chlamydomonas reinhardtii (Chlamydomonas smithii).